Reading from the N-terminus, the 124-residue chain is Large ribosomal subunit protein bL12 (124 aa).

The segment covering 101-115 (ALSKDDAEKAKKELE) has biased composition (basic and acidic residues). The interval 101–124 (ALSKDDAEKAKKELEEAGATVELK) is disordered.

This sequence belongs to the bacterial ribosomal protein bL12 family. As to quaternary structure, homodimer. Part of the ribosomal stalk of the 50S ribosomal subunit. Forms a multimeric L10(L12)X complex, where L10 forms an elongated spine to which 2 to 4 L12 dimers bind in a sequential fashion. Binds GTP-bound translation factors.

Its function is as follows. Forms part of the ribosomal stalk which helps the ribosome interact with GTP-bound translation factors. Is thus essential for accurate translation. The protein is Large ribosomal subunit protein bL12 of Hahella chejuensis (strain KCTC 2396).